The chain runs to 256 residues: Thiazole synthase (256 aa).

The active-site Schiff-base intermediate with DXP is Lys-95. 1-deoxy-D-xylulose 5-phosphate is bound by residues Gly-156, 182–183 (AG), and 204–205 (NT).

Belongs to the ThiG family. Homotetramer. Forms heterodimers with either ThiH or ThiS.

It localises to the cytoplasm. The catalysed reaction is [ThiS sulfur-carrier protein]-C-terminal-Gly-aminoethanethioate + 2-iminoacetate + 1-deoxy-D-xylulose 5-phosphate = [ThiS sulfur-carrier protein]-C-terminal Gly-Gly + 2-[(2R,5Z)-2-carboxy-4-methylthiazol-5(2H)-ylidene]ethyl phosphate + 2 H2O + H(+). It participates in cofactor biosynthesis; thiamine diphosphate biosynthesis. In terms of biological role, catalyzes the rearrangement of 1-deoxy-D-xylulose 5-phosphate (DXP) to produce the thiazole phosphate moiety of thiamine. Sulfur is provided by the thiocarboxylate moiety of the carrier protein ThiS. In vitro, sulfur can be provided by H(2)S. The chain is Thiazole synthase from Idiomarina loihiensis (strain ATCC BAA-735 / DSM 15497 / L2-TR).